The primary structure comprises 268 residues: Shikimate dehydrogenase (NADP(+)) (268 aa).

Shikimate-binding positions include 14 to 16 (SKS) and threonine 61. Lysine 65 acts as the Proton acceptor in catalysis. Asparagine 86 and aspartate 102 together coordinate shikimate. Residues 126–130 (GAGGA), 149–154 (NRTFSK), and methionine 213 each bind NADP(+). Tyrosine 215 contributes to the shikimate binding site. Position 238 (glycine 238) interacts with NADP(+).

The protein belongs to the shikimate dehydrogenase family. Homodimer.

The catalysed reaction is shikimate + NADP(+) = 3-dehydroshikimate + NADPH + H(+). It functions in the pathway metabolic intermediate biosynthesis; chorismate biosynthesis; chorismate from D-erythrose 4-phosphate and phosphoenolpyruvate: step 4/7. Its function is as follows. Involved in the biosynthesis of the chorismate, which leads to the biosynthesis of aromatic amino acids. Catalyzes the reversible NADPH linked reduction of 3-dehydroshikimate (DHSA) to yield shikimate (SA). The protein is Shikimate dehydrogenase (NADP(+)) of Haemophilus influenzae (strain PittEE).